We begin with the raw amino-acid sequence, 333 residues long: MDVVSLDKPFMYFEEIDNELDYEPESANEVAKKLPYQGQLKLLLGELFFLSKLQRHGILDGATVVYIGSAPGTHIRYLRDHFYNLGVIIKWMLIDGRHHDPILNGLRDVTLVTRFVDEEYLRSIKKQLHPSKIILISDVRSKRGGNEPSTADLLSNYALQNVMISILNPVASSLKWRCPFPDQWIKDFYIPHGNKMLQPFAPSYSAEMRLLSIYTGENMRLTRVTKSDAVNYEKKMYYLNKIVRNKVVVNFDYPNQEYDYFHMYFMLRTVYCNKTFPTTKAKVLFLQQSIFRFLNIPTTSTEKVSHEPIQRKISSKNSMSKNRNSKRSVRSNK.

Tyr22 contacts mRNA. 8 residues coordinate S-adenosyl-L-methionine: Gln39, Tyr66, Gly68, Gly72, Asp95, Arg97, Val116, and Asp138. The segment at 169–249 (PVASSLKWRC…NKIVRNKVVV (81 aa)) is binding to NPH-I. The interval 169–333 (PVASSLKWRC…NSKRSVRSNK (165 aa)) is binding to Rap94. Lys175 acts as the For methyltransferase activity in catalysis. MRNA-binding positions include 177-180 (RCPF), Asp182, 205-207 (SAE), and Glu233. Residues 305–333 (SHEPIQRKISSKNSMSKNRNSKRSVRSNK) form a disordered region. Low complexity predominate over residues 311–322 (RKISSKNSMSKN). A compositionally biased stretch (basic residues) spans 323-333 (RNSKRSVRSNK).

Belongs to the class I-like SAM-binding methyltransferase superfamily. Poxvirus/kinetoplastid 2'-O-MTase family. Interacts with poly(A) polymerase catalytic subunit OPG063. Interacts with OPG109 and OPG123; these interactions might help linking transcription to capping and polyadenylation.

It localises to the virion. It carries out the reaction a 5'-end (N(7)-methyl 5'-triphosphoguanosine)-ribonucleoside in mRNA + S-adenosyl-L-methionine = a 5'-end (N(7)-methyl 5'-triphosphoguanosine)-(2'-O-methyl-ribonucleoside) in mRNA + S-adenosyl-L-homocysteine + H(+). Functionally, displays methyltransferase, positive regulation of the poly(A) polymerase and transcription elongation activities. Involved in the modification of both mRNA ends and in intermediate and late gene positive transcription elongation. At the mRNAs 5' end, methylates the ribose 2' OH group of the first transcribed nucleotide, thereby producing a 2'-O-methylpurine cap. At the 3' end, functions as a processivity factor which stimulates the activity of the viral poly(A) polymerase OPG063 that creates mRNA's poly(A) tail. In the presence of OPG102, OPG063 does not dissociate from the RNA allowing tail elongation to around 250 adenylates. The sequence is that of Cap-specific mRNA (nucleoside-2'-O-)-methyltransferase (OPG102) from Vaccinia virus (strain Western Reserve) (VACV).